The following is a 619-amino-acid chain: 1-deoxy-D-xylulose-5-phosphate synthase (619 aa).

Thiamine diphosphate-binding positions include histidine 80 and 121-123 (GHS). Mg(2+) is bound at residue aspartate 152. Thiamine diphosphate-binding positions include 153 to 154 (GA), asparagine 181, tyrosine 288, and glutamate 370. Residue asparagine 181 participates in Mg(2+) binding.

The protein belongs to the transketolase family. DXPS subfamily. In terms of assembly, homodimer. The cofactor is Mg(2+). It depends on thiamine diphosphate as a cofactor.

The catalysed reaction is D-glyceraldehyde 3-phosphate + pyruvate + H(+) = 1-deoxy-D-xylulose 5-phosphate + CO2. Its pathway is metabolic intermediate biosynthesis; 1-deoxy-D-xylulose 5-phosphate biosynthesis; 1-deoxy-D-xylulose 5-phosphate from D-glyceraldehyde 3-phosphate and pyruvate: step 1/1. In terms of biological role, catalyzes the acyloin condensation reaction between C atoms 2 and 3 of pyruvate and glyceraldehyde 3-phosphate to yield 1-deoxy-D-xylulose-5-phosphate (DXP). The protein is 1-deoxy-D-xylulose-5-phosphate synthase of Yersinia pestis (strain Pestoides F).